Here is a 535-residue protein sequence, read N- to C-terminus: MTKYIFVTGGVVSSLGKGITAASLGRLLKNRGLNVTIQKFDPYINVDPGTMSPYQHGEVFVTDDGAETDLDLGHYERFIDINLNKYSNVTTGKIYSSVLQKERRGEYLGGTVQVIPHITNEIKERVYRSGRETNADVVITEIGGTVGDIESLPFLEAIRQIKSDIGRDNVMYIHCTLIPYLKAAGEMKTKPTQHSVKELRSLGIQPNIIVVRTELPVSQDMKDKLALFCDIDTKAVIEARDADTLYAVPLSLQEQNMDQIVCDHLKLDNPAADMTEWTALVNKVRNLSKKTKIALVGKYVELQDAYISVVEALRHAGYSFDTDVEVKWVNAEHVTAENVQELVGDTDGILVPGGFGDRGVEGKIVAIQYARENKVPFLGICLGMQLASIEFARNVLGLEGANSSEINPDTPYAIIDLLPEQKDVEDLGGTLRLGLYPCKLSEETNAYNAYNEPVVYERHRHRYEFNNQFRPDMEKEGFVFSGTSPDGRLVEIIELKDHPWFVAAQFHPELVSRPNRPQPLFHDFVRASITNKESK.

Residues 1 to 267 are amidoligase domain; sequence MTKYIFVTGG…DQIVCDHLKL (267 aa). Ser13 lines the CTP pocket. Ser13 serves as a coordination point for UTP. 14–19 is a binding site for ATP; that stretch reads SLGKGI. Residue Tyr54 participates in L-glutamine binding. Residue Asp71 participates in ATP binding. Asp71 and Glu141 together coordinate Mg(2+). Residues 148 to 150, 188 to 193, and Lys224 contribute to the CTP site; these read DIE and KTKPTQ. Residues 188-193 and Lys224 each bind UTP; that span reads KTKPTQ. 240–242 serves as a coordination point for ATP; that stretch reads RDA. Residues 292-534 enclose the Glutamine amidotransferase type-1 domain; it reads KIALVGKYVE…VRASITNKES (243 aa). Gly354 is a binding site for L-glutamine. The active-site Nucleophile; for glutamine hydrolysis is the Cys381. L-glutamine contacts are provided by residues 382–385, Glu405, and Arg462; that span reads LGMQ. Catalysis depends on residues His507 and Glu509.

Belongs to the CTP synthase family. Homotetramer.

It carries out the reaction UTP + L-glutamine + ATP + H2O = CTP + L-glutamate + ADP + phosphate + 2 H(+). The enzyme catalyses L-glutamine + H2O = L-glutamate + NH4(+). It catalyses the reaction UTP + NH4(+) + ATP = CTP + ADP + phosphate + 2 H(+). The protein operates within pyrimidine metabolism; CTP biosynthesis via de novo pathway; CTP from UDP: step 2/2. With respect to regulation, allosterically activated by GTP, when glutamine is the substrate; GTP has no effect on the reaction when ammonia is the substrate. The allosteric effector GTP functions by stabilizing the protein conformation that binds the tetrahedral intermediate(s) formed during glutamine hydrolysis. Inhibited by the product CTP, via allosteric rather than competitive inhibition. Catalyzes the ATP-dependent amination of UTP to CTP with either L-glutamine or ammonia as the source of nitrogen. Regulates intracellular CTP levels through interactions with the four ribonucleotide triphosphates. In Bacillus cereus (strain G9842), this protein is CTP synthase.